Consider the following 135-residue polypeptide: ATP synthase epsilon chain (135 aa).

Belongs to the ATPase epsilon chain family. F-type ATPases have 2 components, CF(1) - the catalytic core - and CF(0) - the membrane proton channel. CF(1) has five subunits: alpha(3), beta(3), gamma(1), delta(1), epsilon(1). CF(0) has three main subunits: a, b and c.

The protein resides in the cell inner membrane. Its function is as follows. Produces ATP from ADP in the presence of a proton gradient across the membrane. This Hyphomonas neptunium (strain ATCC 15444) protein is ATP synthase epsilon chain.